A 1221-amino-acid chain; its full sequence is Deubiquitinating protein VCPIP1 (1221 aa).

The segment covering 1 to 19 (MSQPPPPPPLPPPPPPPEA) has biased composition (pro residues). The tract at residues 1–40 (MSQPPPPPPLPPPPPPPEAPQTSSSLAAAATPGGLSKRRD) is disordered. Positions 207-360 (LIPVHVDGDG…RNHYIPLVGI (154 aa)) constitute an OTU domain. D215 is an active-site residue. C218 (nucleophile) is an active-site residue. H353 is an active-site residue. Residue K407 is modified to N6-acetyllysine. Disordered regions lie at residues 724-778 (SVMQ…KIRI) and 988-1009 (EATTRSRESSPSHGLLKLGSGG). A phosphoserine mark is found at S746 and S756. Residues 754–770 (PSSAPATPTKAPYSPTT) show a composition bias toward low complexity. At T762 the chain carries Phosphothreonine. Residues S767, S993, S997, and S1076 each carry the phosphoserine modification. Disordered stretches follow at residues 1117 to 1177 (ASMD…TDSR) and 1189 to 1221 (RSKAQKENSMEEPEEMDSQDAETTNTTEPMDHS). Positions 1143–1156 (VSSSVRPGNLQTGL) are enriched in polar residues. Over residues 1162–1173 (LTGGTENLNTET) the composition is skewed to low complexity. 2 positions are modified to phosphoserine: S1197 and S1206. Acidic residues predominate over residues 1198 to 1208 (MEEPEEMDSQD). Residues 1209-1221 (AETTNTTEPMDHS) are compositionally biased toward polar residues.

Binds VCP and the ternary complex containing STX5A, NSFL1C and VCP. Post-translationally, phosphorylated at Ser-1206 by ATM or ATR following induction of covalent DNA-protein cross-links (DPCs). In terms of tissue distribution, widely expressed.

It is found in the nucleus. Its subcellular location is the cytoplasm. The protein localises to the endoplasmic reticulum. The protein resides in the golgi apparatus. It localises to the golgi stack. It catalyses the reaction Thiol-dependent hydrolysis of ester, thioester, amide, peptide and isopeptide bonds formed by the C-terminal Gly of ubiquitin (a 76-residue protein attached to proteins as an intracellular targeting signal).. In terms of biological role, deubiquitinating enzyme involved in DNA repair and reassembly of the Golgi apparatus and the endoplasmic reticulum following mitosis. Necessary for VCP-mediated reassembly of Golgi stacks after mitosis. Plays a role in VCP-mediated formation of transitional endoplasmic reticulum (tER). Mediates dissociation of the ternary complex containing STX5A, NSFL1C and VCP. Also involved in DNA repair following phosphorylation by ATM or ATR: acts by catalyzing deubiquitination of SPRTN, thereby promoting SPRTN recruitment to chromatin and subsequent proteolytic cleavage of covalent DNA-protein cross-links (DPCs). Hydrolyzes 'Lys-11'- and 'Lys-48'-linked polyubiquitin chains. The chain is Deubiquitinating protein VCPIP1 from Rattus norvegicus (Rat).